Consider the following 116-residue polypeptide: NAD(P)H-quinone oxidoreductase subunit M (116 aa).

The protein belongs to the complex I NdhM subunit family. In terms of assembly, NDH-1 can be composed of about 15 different subunits; different subcomplexes with different compositions have been identified which probably have different functions.

It is found in the cellular thylakoid membrane. It catalyses the reaction a plastoquinone + NADH + (n+1) H(+)(in) = a plastoquinol + NAD(+) + n H(+)(out). The catalysed reaction is a plastoquinone + NADPH + (n+1) H(+)(in) = a plastoquinol + NADP(+) + n H(+)(out). Functionally, NDH-1 shuttles electrons from an unknown electron donor, via FMN and iron-sulfur (Fe-S) centers, to quinones in the respiratory and/or the photosynthetic chain. The immediate electron acceptor for the enzyme in this species is believed to be plastoquinone. Couples the redox reaction to proton translocation, and thus conserves the redox energy in a proton gradient. Cyanobacterial NDH-1 also plays a role in inorganic carbon-concentration. This Synechococcus sp. (strain RCC307) protein is NAD(P)H-quinone oxidoreductase subunit M.